The primary structure comprises 533 residues: Flavin-containing monooxygenase 5 (533 aa).

Arg-5 is modified (dimethylated arginine). Residues 10–14 (GAGAS), Glu-33, and 41–42 (LW) each bind FAD. Residue Ser-54 is modified to Phosphoserine. The residue at position 56 (Tyr-56) is a Phosphotyrosine. Phosphoserine is present on Ser-58. Residue 62-63 (NT) participates in FAD binding. 196-199 (SGGD) provides a ligand contact to NADP(+). Ser-280 is subject to Phosphoserine. The residue at position 284 (Thr-284) is a Phosphothreonine. A Phosphoserine modification is found at Ser-401. Residues 513–533 (MMTMGKFMLAIAFLAIAVVYF) form a helical membrane-spanning segment.

Belongs to the FMO family. Requires FAD as cofactor. Kidney and liver.

It is found in the microsome membrane. The protein localises to the endoplasmic reticulum membrane. The enzyme catalyses N,N-dimethylaniline + NADPH + O2 + H(+) = N,N-dimethylaniline N-oxide + NADP(+) + H2O. It catalyses the reaction NADPH + O2 + H(+) = H2O2 + NADP(+). It carries out the reaction heptan-2-one + NADPH + O2 + H(+) = pentyl acetate + NADP(+) + H2O. The catalysed reaction is octan-3-one + NADPH + O2 + H(+) = pentyl propanoate + NADP(+) + H2O. The enzyme catalyses octan-3-one + NADPH + O2 + H(+) = ethyl hexanoate + NADP(+) + H2O. It catalyses the reaction hexan-3-one + NADPH + O2 + H(+) = ethyl butanoate + NADP(+) + H2O. It carries out the reaction hexan-3-one + NADPH + O2 + H(+) = propyl propanoate + NADP(+) + H2O. The catalysed reaction is heptan-4-one + NADPH + O2 + H(+) = propyl butanoate + NADP(+) + H2O. The enzyme catalyses (2E)-geranial + NADPH + O2 + H(+) = (1E)-2,6-dimethylhepta-1,5-dien-1-yl formate + NADP(+) + H2O. It catalyses the reaction sulcatone + NADPH + O2 + H(+) = 4-methylpent-3-en-1-yl acetate + NADP(+) + H2O. Its function is as follows. Acts as a Baeyer-Villiger monooxygenase on a broad range of substrates. Catalyzes the insertion of an oxygen atom into a carbon-carbon bond adjacent to a carbonyl, which converts ketones to esters. Active on diverse carbonyl compounds, whereas soft nucleophiles are mostly non- or poorly reactive. In contrast with other forms of FMO it is non- or poorly active on 'classical' substrates such as drugs, pesticides, and dietary components containing soft nucleophilic heteroatoms. Able to oxidize drug molecules bearing a carbonyl group on an aliphatic chain, such as nabumetone and pentoxifylline. Also, in the absence of substrates, shows slow but yet significant NADPH oxidase activity. Acts as a positive modulator of cholesterol biosynthesis as well as glucose homeostasis, promoting metabolic aging via pleiotropic effects. The protein is Flavin-containing monooxygenase 5 (FMO5) of Oryctolagus cuniculus (Rabbit).